The sequence spans 78 residues: TP53-regulated inhibitor of apoptosis 1 (78 aa).

A coiled-coil region spans residues 1–52 (MNSVGEECTDMKREYDQCFNRWFAEKFLKGECSGDPCTELFRRYRDCVQKAI). The CHCH domain occupies 5–55 (GEECTDMKREYDQCFNRWFAEKFLKGECSGDPCTELFRRYRDCVQKAIKDK). 2 short sequence motifs (cx9C motif) span residues 8 to 18 (CTDMKREYDQC) and 37 to 47 (CTELFRRYRDC). Disulfide bonds link Cys-8-Cys-47 and Cys-18-Cys-37.

It belongs to the TRIAP1/MDM35 family. As to quaternary structure, monomer. Forms a complex with prelid1 in the mitochondrion intermembrane space. Interacts with prelid3a. As to expression, expressed in the developing pronephros.

The protein localises to the mitochondrion. Its subcellular location is the mitochondrion intermembrane space. The catalysed reaction is a 1,2-diacyl-sn-glycero-3-phosphate(in) = a 1,2-diacyl-sn-glycero-3-phosphate(out). In terms of biological role, involved in the modulation of the mitochondrial apoptotic pathway by ensuring the accumulation of cardiolipin (CL) in mitochondrial membranes. The triap1:prelid1 complex probably functions as a phosphatidic acid (PA) transporter across the mitochondrion intermembrane space to provide PA for cardiolipin CL synthesis in the inner membrane. Likewise, the triap1:prelid3a complex mediates the transfer of phosphatidic acid (PA) between liposomes (in vitro) and probably functions as a PA transporter across the mitochondrion intermembrane space (in vivo). Mediates cell survival by inhibiting activation of caspase-9 which prevents induction of apoptosis. Required for pronephros development; probably involved at an early stage in the formation of pronephric components derived from the somatic layer. The chain is TP53-regulated inhibitor of apoptosis 1 from Xenopus tropicalis (Western clawed frog).